We begin with the raw amino-acid sequence, 254 residues long: MSDDEFIDTGLFAEPEGFTPPPPPPHFAKYQRKNKTDPAELNLRLVGKSPLWGHLLWNAGVFTADYLDKHADELVTGKDVLELGAAAGLPSLICGINKCNRVVCTDYPDPDLISNIQHNFDHCQGLDLSKTVVKGFIWGADAKPLMDDSEKEIQNEDKFDLVILSDLVFNHTEHLKLLKTCRDTVKKNGKCLVVFSPHRPKLLENDLEFFRTCEDFQFKAEKIDLVTWKPMFEEDDESIDIRARVYSFFLVPQW.

S-adenosyl-L-methionine contacts are provided by residues Trp-57, 84-86 (GAA), Asp-106, Trp-138, and Ser-165.

Belongs to the class I-like SAM-binding methyltransferase superfamily. EFM7 family.

The protein localises to the cytoplasm. Its function is as follows. S-adenosyl-L-methionine-dependent protein methyltransferase that trimethylates the N-terminal glycine 'Gly-2' of elongation factor 1-alpha, before also catalyzing the mono- and dimethylation of 'Lys-3'. The sequence is that of Protein N-terminal and lysine N-methyltransferase EFM7 from Debaryomyces hansenii (strain ATCC 36239 / CBS 767 / BCRC 21394 / JCM 1990 / NBRC 0083 / IGC 2968) (Yeast).